Here is a 474-residue protein sequence, read N- to C-terminus: MTTPSTSTAPKTLYQKVWDAHVVATPEGEAPIIYVDRHLVHEVTSPQAFSGLKVAGRKLRAPEKTFATMDHNTSTRSASLDALSPMARTQVETLAQNCKDFGVRLYDIHHPNQGIVHVMGPELGITLPGTVIVCGDSHTATHGAFGALAFGIGTSEVEHVLATQTLRQLKAKTMKIEVRGQVTDGVTAKDIVLAIIGKIGMDGGTGYVVEFCGEAIEALSMEGRMTVCNMAIEMGAKAGMVAPDQTTFDYLEGREFAPKGEDWAEAVAAWKALKTDVGAEFDASVVLDAADIAPQLTWGTNPGQVVAIDAPVPNPADEANPTIRASMEKALDYIGLTAGTPMTDVAINKVFIGSCTNSRIEDLRSAAKQAKGRKVASGVTAIVVPGSGQVKAQAEAEGLDKIFIEAGFEWRLPGCSMCLAMNDDRLEAGDRCASTSNRNFEGRQGRGSRTHLVSPAMAAAAAIAGHFVDIRKPY.

3 residues coordinate [4Fe-4S] cluster: cysteine 355, cysteine 415, and cysteine 418.

This sequence belongs to the aconitase/IPM isomerase family. LeuC type 1 subfamily. As to quaternary structure, heterodimer of LeuC and LeuD. Requires [4Fe-4S] cluster as cofactor.

The catalysed reaction is (2R,3S)-3-isopropylmalate = (2S)-2-isopropylmalate. The protein operates within amino-acid biosynthesis; L-leucine biosynthesis; L-leucine from 3-methyl-2-oxobutanoate: step 2/4. Catalyzes the isomerization between 2-isopropylmalate and 3-isopropylmalate, via the formation of 2-isopropylmaleate. The polypeptide is 3-isopropylmalate dehydratase large subunit (Shewanella sp. (strain MR-4)).